The primary structure comprises 409 residues: Transcriptional regulator GME11370 (409 aa).

Residues 17–44 constitute a DNA-binding region (zn(2)-C6 fungal-type); the sequence is CHACAASKLKCSKEKPSCARCLKRNKPC. Positions 49-83 are disordered; the sequence is TRRAGRHHGSRSKKVPTISPASAPEPQPFSTTPPD. Residues 51 to 62 show a composition bias toward basic residues; that stretch reads RAGRHHGSRSKK.

Its subcellular location is the nucleus. Transcriptional regulator; part of the gene cluster that mediates the biosynthesis of dibenzodioxocinones such as pestalotiollide B, a novel class of inhibitors against cholesterol ester transfer protein (CEPT). The polypeptide is Transcriptional regulator GME11370 (Pestalotiopsis microspora).